We begin with the raw amino-acid sequence, 198 residues long: Transcriptional regulator GfcR (198 aa).

This sequence belongs to the purine/pyrimidine phosphoribosyltransferase family. GfcR subfamily.

The protein is Transcriptional regulator GfcR of Methanosphaera stadtmanae (strain ATCC 43021 / DSM 3091 / JCM 11832 / MCB-3).